Here is a 439-residue protein sequence, read N- to C-terminus: Ribosomal protein uS12 methylthiotransferase RimO (439 aa).

Residues 3 to 118 enclose the MTTase N-terminal domain; sequence KKFYITTLGC…AGKILREKFP (116 aa). [4Fe-4S] cluster is bound by residues cysteine 12, cysteine 48, cysteine 81, cysteine 157, cysteine 161, and cysteine 164. The region spanning 143 to 370 is the Radical SAM core domain; it reads NYSKPYAYVK…RDVHLAILEE (228 aa). The TRAM domain maps to 373 to 438; it reads ESRIGQTYDA…EYDMNGTWIS (66 aa).

Belongs to the methylthiotransferase family. RimO subfamily. Requires [4Fe-4S] cluster as cofactor.

The protein resides in the cytoplasm. The enzyme catalyses L-aspartate(89)-[ribosomal protein uS12]-hydrogen + (sulfur carrier)-SH + AH2 + 2 S-adenosyl-L-methionine = 3-methylsulfanyl-L-aspartate(89)-[ribosomal protein uS12]-hydrogen + (sulfur carrier)-H + 5'-deoxyadenosine + L-methionine + A + S-adenosyl-L-homocysteine + 2 H(+). Its function is as follows. Catalyzes the methylthiolation of an aspartic acid residue of ribosomal protein uS12. This chain is Ribosomal protein uS12 methylthiotransferase RimO, found in Leptospira borgpetersenii serovar Hardjo-bovis (strain L550).